The following is a 62-amino-acid chain: Snaclec aspercetin subunit beta (62 aa).

An intrachain disulfide couples cysteine 2 to cysteine 13. Positions 9-62 (YEGHCYRVFKPPKDWADAERFCSQQAKGGHLVSIERFGREDFVSNLITKNLQRG) constitute a C-type lectin domain.

Belongs to the snaclec family. As to quaternary structure, heterodimer; disulfide-linked. Expressed by the venom gland.

It is found in the secreted. Functionally, snaclec that binds to von Willebrand factor (VWF) and induces its interaction with GPIbalpha (GP1BA) (via the vWF A1 domain), resulting in platelet aggregation. Intramuscular and intravenous injections in mice induce a dose-dependent drop in platelet count (thrombocytopenia). Pretreatment by intravenous injection by this protein in mice potentiates the hemorrhagic lesion in the skin provoked by the metalloproteinase BaP1 intradermally injected. This result is not observed when both BaP1 and this protein are injected simultaneously. The sequence is that of Snaclec aspercetin subunit beta from Bothrops asper (Terciopelo).